The following is a 300-amino-acid chain: Acetyl-coenzyme A carboxylase carboxyl transferase subunit beta 2 (300 aa).

One can recognise a CoA carboxyltransferase N-terminal domain in the interval 26–294; it reads VWIKCPSCRE…ATAHKSEPIV (269 aa). The Zn(2+) site is built by Cys-30, Cys-33, Cys-49, and Cys-51. The C4-type zinc finger occupies 30 to 51; sequence CPSCRELIYHKQLAERMKVCRC.

It belongs to the AccD/PCCB family. In terms of assembly, acetyl-CoA carboxylase is a heterohexamer composed of biotin carboxyl carrier protein (AccB), biotin carboxylase (AccC) and two subunits each of ACCase subunit alpha (AccA) and ACCase subunit beta (AccD). Requires Zn(2+) as cofactor.

It is found in the cytoplasm. It catalyses the reaction N(6)-carboxybiotinyl-L-lysyl-[protein] + acetyl-CoA = N(6)-biotinyl-L-lysyl-[protein] + malonyl-CoA. It functions in the pathway lipid metabolism; malonyl-CoA biosynthesis; malonyl-CoA from acetyl-CoA: step 1/1. Its function is as follows. Component of the acetyl coenzyme A carboxylase (ACC) complex. Biotin carboxylase (BC) catalyzes the carboxylation of biotin on its carrier protein (BCCP) and then the CO(2) group is transferred by the transcarboxylase to acetyl-CoA to form malonyl-CoA. The sequence is that of Acetyl-coenzyme A carboxylase carboxyl transferase subunit beta 2 from Roseiflexus sp. (strain RS-1).